The chain runs to 752 residues: Multifunctional tryptophan biosynthesis protein (752 aa).

Positions 3 to 202 (FTLLIDNYDS…IQMKGGKWGG (200 aa)) constitute a Glutamine amidotransferase type-1 domain. Position 58–60 (58–60 (GPG)) interacts with L-glutamine. Residue C86 is the Nucleophile; for GATase activity of the active site. Position 136–137 (136–137 (SL)) interacts with L-glutamine. Residues H176 and E178 each act as for GATase activity in the active site. Residues 231–495 (ILNKIHAQRL…DTKAFLRSLI (265 aa)) are indole-3-glycerol phosphate synthase. The segment at 509–752 (LVKICGIRST…VEAFVKAVRG (244 aa)) is N-(5'-phosphoribosyl)anthranilate isomerase.

It carries out the reaction N-(5-phospho-beta-D-ribosyl)anthranilate = 1-(2-carboxyphenylamino)-1-deoxy-D-ribulose 5-phosphate. The enzyme catalyses 1-(2-carboxyphenylamino)-1-deoxy-D-ribulose 5-phosphate + H(+) = (1S,2R)-1-C-(indol-3-yl)glycerol 3-phosphate + CO2 + H2O. The catalysed reaction is chorismate + L-glutamine = anthranilate + pyruvate + L-glutamate + H(+). Its pathway is amino-acid biosynthesis; L-tryptophan biosynthesis; L-tryptophan from chorismate: step 1/5. It participates in amino-acid biosynthesis; L-tryptophan biosynthesis; L-tryptophan from chorismate: step 3/5. The protein operates within amino-acid biosynthesis; L-tryptophan biosynthesis; L-tryptophan from chorismate: step 4/5. Functionally, trifunctional enzyme bearing the Gln amidotransferase (GATase) domain of anthranilate synthase, indole-glycerolphosphate synthase, and phosphoribosylanthranilate isomerase activities. This is Multifunctional tryptophan biosynthesis protein (TRP1) from Cryptococcus neoformans var. grubii serotype A (strain H99 / ATCC 208821 / CBS 10515 / FGSC 9487) (Filobasidiella neoformans var. grubii).